A 195-amino-acid chain; its full sequence is Ras-related protein rac-2 (195 aa).

10–17 lines the GTP pocket; the sequence is GDGAVGKT. Residues 32-40 carry the Effector region motif; it reads YILTVFDTY. Residues 57-61 and 115-118 contribute to the GTP site; these read DTAGQ and TKAD. A disordered region spans residues 176–195; the sequence is GLTPPQTPQTRAKKSNCTVL. The residue at position 192 (Cys192) is a Cysteine methyl ester. Cys192 carries S-geranylgeranyl cysteine lipidation. A propeptide spans 193–195 (removed in mature form); sequence TVL.

It belongs to the small GTPase superfamily. Rho family.

It is found in the cell membrane. In terms of biological role, during gonad morphogenesis, plays a role in distal tip cell (DTC)-mediated guidance of gonad elongation. The polypeptide is Ras-related protein rac-2 (rac-2) (Caenorhabditis elegans).